An 86-amino-acid polypeptide reads, in one-letter code: MLLWIVATLLIFSLPVSTALDYNDFSLQRIARAPHPSSALLVPYPRVGKRSNILNNNSESQNSVQKRLYMARVGKRAFFYTPRIGK.

The signal sequence occupies residues 1–19 (MLLWIVATLLIFSLPVSTA).

Expressed in two pairs of neurons in the anterior part of the nervous system (at protein level).

In terms of biological role, encodes at least three neuropeptides: two of the periviscerokinin family (APHPSSALLVPYPRV-amide and LYMARV-amide) and one pyrokinin (AFFYTPRI-amide). Its function is as follows. Putative ligand for neuromedin U receptor homolog nmur-2. This Caenorhabditis elegans protein is Neuropeptide precursor capa-1.